Here is a 302-residue protein sequence, read N- to C-terminus: Methionyl-tRNA formyltransferase (302 aa).

107-110 serves as a coordination point for (6S)-5,6,7,8-tetrahydrofolate; that stretch reads SLLP.

This sequence belongs to the Fmt family.

It carries out the reaction L-methionyl-tRNA(fMet) + (6R)-10-formyltetrahydrofolate = N-formyl-L-methionyl-tRNA(fMet) + (6S)-5,6,7,8-tetrahydrofolate + H(+). In terms of biological role, attaches a formyl group to the free amino group of methionyl-tRNA(fMet). The formyl group appears to play a dual role in the initiator identity of N-formylmethionyl-tRNA by promoting its recognition by IF2 and preventing the misappropriation of this tRNA by the elongation apparatus. The polypeptide is Methionyl-tRNA formyltransferase (Leifsonia xyli subsp. xyli (strain CTCB07)).